Reading from the N-terminus, the 522-residue chain is Signal transduction histidine-protein kinase/phosphatase MprB (522 aa).

The Cytoplasmic portion of the chain corresponds to 1–30 (MIRLYRPQRPPLRAPLRATPSLSLRWRVML). The chain crosses the membrane as a helical span at residues 31-51 (LAMSMVAMVVVLMAFAVYAVI). Over 52-167 (SAALYSDIDN…PTEAVMNKLR (116 aa)) the chain is Extracellular. The helical transmembrane segment at 168-188 (WVLLIVGGVGVAVAAVAGGMV) threads the bilayer. Residues 189–522 (TRAGLRPVAR…SVDSQSARAR (334 aa)) are Cytoplasmic-facing. The HAMP domain occupies 190-242 (RAGLRPVARLTEAAERVARTDDLRPIPVFGSDELARLTESFNLMLRALAESRE). The Histidine kinase domain occupies 250 to 470 (DAGHELRTPL…SFYVLLPGRS (221 aa)). His-253 is modified (phosphohistidine; by autocatalysis). The interval 467–522 (PGRSLPPAGHSTPAGESETDQAEAATDPAVPVAGDTANSRESANVISVDSQSARAR) is disordered. Polar residues predominate over residues 502 to 522 (TANSRESANVISVDSQSARAR).

Mg(2+) serves as cofactor. Mn(2+) is required as a cofactor. In terms of processing, autophosphorylated.

The protein resides in the cell membrane. It catalyses the reaction ATP + protein L-histidine = ADP + protein N-phospho-L-histidine.. In terms of biological role, member of the two-component regulatory system MprB/MprA which contributes to maintaining a balance among several systems involved in stress resistance and is required for establishment and maintenance of persistent infection in the host. In response to environmental signals MprB acts both as a membrane-associated protein kinase that undergoes autophosphorylation and subsequently transfers the phosphate to MprA, and a protein phosphatase that dephosphorylates phospho-MprA. The chain is Signal transduction histidine-protein kinase/phosphatase MprB (mprB) from Mycolicibacterium paratuberculosis (strain ATCC BAA-968 / K-10) (Mycobacterium paratuberculosis).